The chain runs to 76 residues: Potassium/proton antiporter CemA (76 aa).

Residues 35 to 52 (QILSCLVSIFPVILDTIF) traverse the membrane as a helical segment.

This sequence belongs to the CemA family.

The protein resides in the plastid. Its subcellular location is the chloroplast inner membrane. The enzyme catalyses K(+)(in) + H(+)(out) = K(+)(out) + H(+)(in). Contributes to K(+)/H(+) antiport activity by supporting proton efflux to control proton extrusion and homeostasis in chloroplasts in a light-dependent manner to modulate photosynthesis. Prevents excessive induction of non-photochemical quenching (NPQ) under continuous-light conditions. Indirectly promotes efficient inorganic carbon uptake into chloroplasts. In Vicia faba (Broad bean), this protein is Potassium/proton antiporter CemA.